The chain runs to 194 residues: Fe/S biogenesis protein NfuA (194 aa).

[4Fe-4S] cluster contacts are provided by Cys-151 and Cys-154.

Belongs to the NfuA family. Homodimer. [4Fe-4S] cluster is required as a cofactor.

In terms of biological role, involved in iron-sulfur cluster biogenesis. Binds a 4Fe-4S cluster, can transfer this cluster to apoproteins, and thereby intervenes in the maturation of Fe/S proteins. Could also act as a scaffold/chaperone for damaged Fe/S proteins. This Photobacterium profundum (strain SS9) protein is Fe/S biogenesis protein NfuA.